Here is a 358-residue protein sequence, read N- to C-terminus: Protein-L-isoaspartate O-methyltransferase domain-containing protein 1 (358 aa).

Gly-2 carries N-myristoyl glycine lipidation. The active site involves Ser-64. AdoMet binding motif stretches follow at residues 85 to 94, 160 to 164, and 181 to 191; these read LNLGSGTGYL, YDRIY, and LKVGGILVMPI. Positions 240 to 250 are BC-box; the sequence is VRNLQDLARIY. The disordered stretch occupies residues 300 to 339; that stretch reads PLDSEEDERMEDDNKEEEDKDHSEALKPEEPPRNLLREKI. Residues 302–318 show a composition bias toward acidic residues; sequence DSEEDERMEDDNKEEED. Positions 319-339 are enriched in basic and acidic residues; that stretch reads KDHSEALKPEEPPRNLLREKI. The tract at residues 342–345 is CUL-box; sequence LPLP.

Belongs to the methyltransferase superfamily. L-isoaspartyl/D-aspartyl protein methyltransferase family. As to quaternary structure, component of the probable ECS(PCMTD1) E3 ubiquitin-protein ligase complex, at least composed of CUL5, ELOB, ELOC, RBX2 and PCMTD1.

It is found in the cytoplasm. Its subcellular location is the membrane. Functionally, substrate recognition component of an ECS (Elongin BC-CUL5-SOCS-box protein) E3 ubiquitin ligase complex which mediates the ubiquitination and subsequent proteasomal degradation of target proteins. Specifically binds to the methyltransferase cofactor S-adenosylmethionine (AdoMet) via the N-terminal AdoMet binding motif, but does not display methyltransferase activity. May provide an alternate maintenance pathway for modified proteins by acting as a damage-specific E3 ubiquitin ligase adaptor protein. In Gallus gallus (Chicken), this protein is Protein-L-isoaspartate O-methyltransferase domain-containing protein 1 (PCMTD1).